Here is a 363-residue protein sequence, read N- to C-terminus: 3-dehydroquinate synthase (363 aa).

NAD(+) is bound by residues 70 to 75 (SGETSK), 104 to 108 (GVIGD), 128 to 129 (TT), Lys141, Lys150, and 168 to 171 (TLDT). Zn(2+) contacts are provided by Glu183, His245, and His262.

This sequence belongs to the sugar phosphate cyclases superfamily. Dehydroquinate synthase family. Co(2+) serves as cofactor. It depends on Zn(2+) as a cofactor. Requires NAD(+) as cofactor.

It localises to the cytoplasm. The enzyme catalyses 7-phospho-2-dehydro-3-deoxy-D-arabino-heptonate = 3-dehydroquinate + phosphate. The protein operates within metabolic intermediate biosynthesis; chorismate biosynthesis; chorismate from D-erythrose 4-phosphate and phosphoenolpyruvate: step 2/7. Functionally, catalyzes the conversion of 3-deoxy-D-arabino-heptulosonate 7-phosphate (DAHP) to dehydroquinate (DHQ). The sequence is that of 3-dehydroquinate synthase from Alkaliphilus oremlandii (strain OhILAs) (Clostridium oremlandii (strain OhILAs)).